The sequence spans 162 residues: Interleukin-15 (162 aa).

The first 29 residues, 1–29 (MRILKPYLRSTSIQCYLCLLLNSHFLTEA), serve as a signal peptide directing secretion. Positions 30-48 (GIHVFILGCISASLPKTEA) are excised as a propeptide. Disulfide bonds link C83–C133 and C90–C136. 4 N-linked (GlcNAc...) asparagine glycosylation sites follow: N104, N113, N121, and N127.

This sequence belongs to the IL-15/IL-21 family.

It is found in the secreted. Its function is as follows. Cytokine that plays a major role in the development of inflammatory and protective immune responses to microbial invaders and parasites by modulating immune cells of both the innate and adaptive immune systems. Stimulates the proliferation of natural killer cells, T-cells and B-cells and promotes the secretion of several cytokines. In monocytes, induces the production of IL8 and monocyte chemotactic protein 1/CCL2, two chemokines that attract neutrophils and monocytes respectively to sites of infection. Unlike most cytokines, which are secreted in soluble form, IL15 is expressed in association with its high affinity IL15RA on the surface of IL15-producing cells and delivers signals to target cells that express IL2RB and IL2RG receptor subunits. Binding to its receptor triggers the phosphorylation of JAK1 and JAK3 and the recruitment and subsequent phosphorylation of signal transducer and activator of transcription-3/STAT3 and STAT5. In mast cells, induces the rapid tyrosine phosphorylation of STAT6 and thereby controls mast cell survival and release of cytokines such as IL4. This Bos taurus (Bovine) protein is Interleukin-15 (IL15).